Consider the following 546-residue polypeptide: Membrane protein insertase YidC (546 aa).

Residues 8–28 (ILLATVLSVGILILWQVIFPT) form a helical membrane-spanning segment. Residues 31 to 70 (APPKPAHPPAAEVAKPAAPASPAPGAAAPAVPAPPPDAPE) form a disordered region. Positions 39 to 60 (PAAEVAKPAAPASPAPGAAAPA) are enriched in low complexity. Helical transmembrane passes span 326–346 (IDYG…LYVM), 356–376 (WGVA…PLTY), 422–442 (LGGC…YAAL), 459–479 (LTAH…SFVM), and 498–518 (FFPG…TLYI).

This sequence belongs to the OXA1/ALB3/YidC family. Type 1 subfamily. As to quaternary structure, interacts with the Sec translocase complex via SecD. Specifically interacts with transmembrane segments of nascent integral membrane proteins during membrane integration.

It localises to the cell inner membrane. In terms of biological role, required for the insertion and/or proper folding and/or complex formation of integral membrane proteins into the membrane. Involved in integration of membrane proteins that insert both dependently and independently of the Sec translocase complex, as well as at least some lipoproteins. Aids folding of multispanning membrane proteins. The sequence is that of Membrane protein insertase YidC from Anaeromyxobacter dehalogenans (strain 2CP-1 / ATCC BAA-258).